Reading from the N-terminus, the 267-residue chain is MTRIALGIEYDGTDFRGWQMQQSGVRTVQECLEAALSKVANHSVTVVCAGRTDAGVHGTGQVVHFDSDAPREMKSWIMGGNTNLPRDVTIRWAVPVSDDFHARFSAVSRRYRYVIYNHARPPALYRSQVTWNHRPLDVAAMREAASYLVGHHDFTAYRSVHCQAKSPLKTLHSLELYEQGKVLVLEAHANAFLMHMVRNIAGVLMKVGAGKKPPVWAKDVLECRDRRLGAATAPPFGLYLVEIEYPELFALPDEPLGPLWLPDRLEA.

The active-site Nucleophile is the D53. Y111 contributes to the substrate binding site.

The protein belongs to the tRNA pseudouridine synthase TruA family. Homodimer.

The enzyme catalyses uridine(38/39/40) in tRNA = pseudouridine(38/39/40) in tRNA. In terms of biological role, formation of pseudouridine at positions 38, 39 and 40 in the anticodon stem and loop of transfer RNAs. This chain is tRNA pseudouridine synthase A, found in Alcanivorax borkumensis (strain ATCC 700651 / DSM 11573 / NCIMB 13689 / SK2).